The sequence spans 490 residues: Probable cytochrome P450 308a1 (490 aa).

C431 is a heme binding site.

It belongs to the cytochrome P450 family. The cofactor is heme.

The protein resides in the endoplasmic reticulum membrane. The protein localises to the microsome membrane. Functionally, may be involved in the metabolism of insect hormones and in the breakdown of synthetic insecticides. In Drosophila melanogaster (Fruit fly), this protein is Probable cytochrome P450 308a1 (Cyp308a1).